The chain runs to 75 residues: MQAAPQREETEWRVQSKRGLMPAYRGEAGQQVNIKIMEYSERNVRQLASNEQEEYIPRKINVGVINTPTLIRSDY.

This is an uncharacterized protein from Escherichia coli (strain K12).